Here is a 325-residue protein sequence, read N- to C-terminus: D-xylose 1-dehydrogenase (NADP(+)) 2 (325 aa).

Residues 1 to 22 form the signal peptide; the sequence is MMFGILGTAGIGVKSVIPAVQA.

Belongs to the Gfo/Idh/MocA family. As to quaternary structure, homotetramer.

It localises to the secreted. It catalyses the reaction D-xylose + NADP(+) = D-xylono-1,5-lactone + NADPH + H(+). Its function is as follows. NADP-dependent D-xylose dehydrogenase involved in the degradation of D-xylose, a major component of hemicelluloses such as xylan. Even if it shows D-xylose dehydrogenase activity, it is not essential for D-xylose degradation. The polypeptide is D-xylose 1-dehydrogenase (NADP(+)) 2 (Haloferax volcanii (strain ATCC 29605 / DSM 3757 / JCM 8879 / NBRC 14742 / NCIMB 2012 / VKM B-1768 / DS2) (Halobacterium volcanii)).